We begin with the raw amino-acid sequence, 458 residues long: Siroheme synthase (458 aa).

Residues 1-203 are precorrin-2 dehydrogenase /sirohydrochlorin ferrochelatase; the sequence is MDYLPLFFDL…GNLAAAEQLI (203 aa). NAD(+)-binding positions include 22-23 and 43-44; these read TI and PK. Ser-128 is modified (phosphoserine). Residues 216 to 458 are uroporphyrinogen-III C-methyltransferase; it reads GEVYLVGAGP…RCHEKLNWYK (243 aa). Residue Pro-225 participates in S-adenosyl-L-methionine binding. Asp-248 serves as the catalytic Proton acceptor. Lys-270 serves as the catalytic Proton donor. S-adenosyl-L-methionine is bound by residues 301–303, Ile-306, 331–332, Met-383, and Gly-412; these read GGD and TA.

In the N-terminal section; belongs to the precorrin-2 dehydrogenase / sirohydrochlorin ferrochelatase family. It in the C-terminal section; belongs to the precorrin methyltransferase family.

It carries out the reaction uroporphyrinogen III + 2 S-adenosyl-L-methionine = precorrin-2 + 2 S-adenosyl-L-homocysteine + H(+). The catalysed reaction is precorrin-2 + NAD(+) = sirohydrochlorin + NADH + 2 H(+). It catalyses the reaction siroheme + 2 H(+) = sirohydrochlorin + Fe(2+). The protein operates within cofactor biosynthesis; adenosylcobalamin biosynthesis; precorrin-2 from uroporphyrinogen III: step 1/1. It participates in cofactor biosynthesis; adenosylcobalamin biosynthesis; sirohydrochlorin from precorrin-2: step 1/1. It functions in the pathway porphyrin-containing compound metabolism; siroheme biosynthesis; precorrin-2 from uroporphyrinogen III: step 1/1. Its pathway is porphyrin-containing compound metabolism; siroheme biosynthesis; siroheme from sirohydrochlorin: step 1/1. The protein operates within porphyrin-containing compound metabolism; siroheme biosynthesis; sirohydrochlorin from precorrin-2: step 1/1. In terms of biological role, multifunctional enzyme that catalyzes the SAM-dependent methylations of uroporphyrinogen III at position C-2 and C-7 to form precorrin-2 via precorrin-1. Then it catalyzes the NAD-dependent ring dehydrogenation of precorrin-2 to yield sirohydrochlorin. Finally, it catalyzes the ferrochelation of sirohydrochlorin to yield siroheme. The sequence is that of Siroheme synthase from Saccharophagus degradans (strain 2-40 / ATCC 43961 / DSM 17024).